A 441-amino-acid polypeptide reads, in one-letter code: 4-hydroxybenzoate polyprenyltransferase, mitochondrial (441 aa).

Residues 1–95 (MLRKLTSNSS…TLGELVLRDY (95 aa)) constitute a mitochondrion transit peptide. 8 helical membrane passes run 129-149 (IGSWLLFWPCGWSIALSAPAG), 154-174 (LWTLTLFGAGAFIMRGAGCTI), 204-224 (AWFFLGAQLGVGLLILLELNW), 225-245 (YSIVLGASSLGLVIIYPLMKR), 246-266 (ITHWPQLVLGMTFNWGALLGW), 271-291 (GSVMWSACLPLYVAGVCWTIV), 322-342 (LWLSGFSTAMIGGLVASGMVC), and 378-398 (FISNHQVGLILFLGIVLGTLY). Residues 405–441 (AGKSSTTSSSSTSSSSSPSSGLLLAATNHHQPARQAS) are disordered. Positions 408–424 (SSTTSSSSTSSSSSPSS) are enriched in low complexity. Positions 432 to 441 (NHHQPARQAS) are enriched in polar residues.

It belongs to the UbiA prenyltransferase family. The cofactor is Mg(2+).

Its subcellular location is the mitochondrion inner membrane. The enzyme catalyses an all-trans-polyprenyl diphosphate + 4-hydroxybenzoate = a 4-hydroxy-3-(all-trans-polyprenyl)benzoate + diphosphate. It participates in cofactor biosynthesis; ubiquinone biosynthesis. Catalyzes the prenylation of para-hydroxybenzoate (PHB) with an all-trans polyprenyl group. Mediates the second step in the final reaction sequence of coenzyme Q (CoQ) biosynthesis, which is the condensation of the polyisoprenoid side chain with PHB, generating the first membrane-bound Q intermediate. In Aedes aegypti (Yellowfever mosquito), this protein is 4-hydroxybenzoate polyprenyltransferase, mitochondrial.